The primary structure comprises 215 residues: UPF0488 protein C8orf33 homolog (215 aa).

3 disordered regions span residues 1 to 72 (MLED…DEQL), 87 to 111 (LRTQKTSSKQREEASRALKTLRSSK), and 158 to 199 (CKPV…DTKP). The segment covering 29–39 (AKKHKKKKKKK) has biased composition (basic residues). The span at 40 to 63 (AGEGKDDQQRETKTTEGETAKQET) shows a compositional bias: basic and acidic residues. 2 stretches are compositionally biased toward basic and acidic residues: residues 167–178 (ERNTQPKNKTDG) and 188–199 (TNEHTKTEDTKP).

This sequence belongs to the UPF0488 family.

This chain is UPF0488 protein C8orf33 homolog, found in Danio rerio (Zebrafish).